A 265-amino-acid polypeptide reads, in one-letter code: Type 1 encapsulin shell protein (265 aa).

The protein belongs to the encapsulin family. Family 1 subfamily. Multimeric. The encapsulin nanocompartment is formed by 60 subunits. Monomers form pentamers which assemble to form shells. There are 12 pores where the pentamers meet as well as 3-fold axis channels and dimer channels; none are larger than 3-4 Angstroms in diameter. The N-terminus of the protein is inside the shell, the C-terminus is outside. In terms of processing, the initiator methionine is partially removed. When isolated from culture filtrate isoelectric focusing gives 3 bands, none of which are glycosylated.

The protein localises to the encapsulin nanocompartment. It is found in the secreted. The protein resides in the cell membrane. In terms of biological role, shell component of a type 1 encapsulin nanocompartment in situ; its cargo protects against oxidative stress at low pH. In situ and in E.coli assembles into proteinaceous shells about 22 nm in diameter with 2.5 nm thick walls. Cargo proteins are targeted to the interior via their C-terminal extensions; empty intact shells can be isolated in E.coli in the absence of cargo protein. There are at least 4 possible cargo proteins, DyP (encoded in the same locus), FolB, BfrB and Rv1762c; DyP and Rv1762c have been identified in vivo. Probably involved in protection against oxidative damage from the host immune response. A T-cell antigen found in bacterial culture cell filtrates, stimulates mouse immune response. Does not have detectable bacteriocin activity. The polypeptide is Type 1 encapsulin shell protein (Mycobacterium tuberculosis (strain ATCC 25618 / H37Rv)).